A 432-amino-acid chain; its full sequence is Ribosomal protein uS12 methylthiotransferase RimO (432 aa).

One can recognise an MTTase N-terminal domain in the interval 4–122 (NTIDIITLGC…LLADLGKAYK (119 aa)). [4Fe-4S] cluster-binding residues include Cys-13, Cys-51, Cys-85, Cys-146, Cys-150, and Cys-153. Residues 132–363 (TTPHHYAYLK…MALQQEIAGE (232 aa)) enclose the Radical SAM core domain. The TRAM domain occupies 366–432 (QTKIGKEFKV…DDFDLYASIL (67 aa)).

The protein belongs to the methylthiotransferase family. RimO subfamily. [4Fe-4S] cluster serves as cofactor.

The protein resides in the cytoplasm. The enzyme catalyses L-aspartate(89)-[ribosomal protein uS12]-hydrogen + (sulfur carrier)-SH + AH2 + 2 S-adenosyl-L-methionine = 3-methylsulfanyl-L-aspartate(89)-[ribosomal protein uS12]-hydrogen + (sulfur carrier)-H + 5'-deoxyadenosine + L-methionine + A + S-adenosyl-L-homocysteine + 2 H(+). Catalyzes the methylthiolation of an aspartic acid residue of ribosomal protein uS12. The chain is Ribosomal protein uS12 methylthiotransferase RimO from Phocaeicola vulgatus (strain ATCC 8482 / DSM 1447 / JCM 5826 / CCUG 4940 / NBRC 14291 / NCTC 11154) (Bacteroides vulgatus).